The following is a 141-amino-acid chain: Hemoglobin subunit alpha-3 (141 aa).

The residue at position 1 (Ser1) is an N-acetylserine. Residues 1-141 (SLSASEKAAV…VSAVLTSKYR (141 aa)) form the Globin domain. His58 is an O2 binding site. His87 contacts heme b.

This sequence belongs to the globin family. As to quaternary structure, heterotetramer of two alpha chains and two beta chains. Red blood cells.

Its function is as follows. This is a tadpole (larval) alpha chain. The polypeptide is Hemoglobin subunit alpha-3 (Aquarana catesbeiana (American bullfrog)).